The following is a 427-amino-acid chain: MAIPRFSSLLRCRKWAKSDWLVASIGCVLIVFFLSFFFDPTSDSVPSVDRSRPIISPSDLVKLKLSSVAKERGAFCLDGSLPGYHFHEGSGSGSQSWLVHLEGGGWCNTVASCSARALTKLGSSNYFEQEVAFQGVLSSDPSQNPEFFNWNKVAIRYCDGASFSGRPEAEFKNGTRLFFRGQLIWEAIIDELLSMGMSDAKQAILTGCSAGGLASLIHCDYFRDHLPKDAAVKCVSDGGYFLNVPDVLGNPTMRSFYHDVVNLQGVEKSLDQKCVAKTEPSKCMFPQEFLKNIRTPVFLVNPAYDFWQIQHVLVPTSADPDKSWAKCRLNIKECDAEQIKVLHGFRSSMMTAIGEFHQNKDGGMFIDSCYAHCQTVMSVTWHSLTSPRIENKTIAESVGDWYFNRKPVKLIDCPYPCNPSCYNMNFT.

Residues 1-35 (MAIPRFSSLLRCRKWAKSDWLVASIGCVLIVFFLS) form the signal peptide. Asn-173 is a glycosylation site (N-linked (GlcNAc...) asparagine). Active-site charge relay system residues include Ser-209, Asp-305, and His-372. Asn-391 carries N-linked (GlcNAc...) asparagine glycosylation.

Belongs to the pectinacetylesterase family.

Its subcellular location is the secreted. The protein resides in the cell wall. Functionally, hydrolyzes acetyl esters in homogalacturonan regions of pectin. In type I primary cell wall, galacturonic acid residues of pectin can be acetylated at the O-2 and O-3 positions. Decreasing the degree of acetylation of pectin gels in vitro alters their physical properties. The polypeptide is Pectin acetylesterase 5 (Arabidopsis thaliana (Mouse-ear cress)).